The chain runs to 260 residues: Snake venom serine protease pallabin (260 aa).

The signal sequence occupies residues 1–18 (MVLIRVLANLLILQLSYA). A propeptide spanning residues 19 to 24 (QKSSKL) is cleaved from the precursor. In terms of domain architecture, Peptidase S1 spans 25-251 (VIGGDECNIN…HLDWIENIIA (227 aa)). 6 disulfides stabilise this stretch: cysteine 31–cysteine 163, cysteine 50–cysteine 66, cysteine 98–cysteine 258, cysteine 142–cysteine 212, cysteine 174–cysteine 191, and cysteine 202–cysteine 227. Catalysis depends on histidine 65, which acts as the Charge relay system. Asparagine 103 carries an N-linked (GlcNAc...) asparagine glycan. Residue aspartate 110 is the Charge relay system of the active site. Serine 206 serves as the catalytic Charge relay system.

Belongs to the peptidase S1 family. Snake venom subfamily. In terms of assembly, monomer. Expressed by the venom gland.

Its subcellular location is the secreted. Snake venom serine protease that may act in the hemostasis system of the prey. The protein is Snake venom serine protease pallabin (JZTHR5) of Gloydius halys (Chinese water mocassin).